Reading from the N-terminus, the 525-residue chain is GMP synthase [glutamine-hydrolyzing] (525 aa).

One can recognise a Glutamine amidotransferase type-1 domain in the interval 8–206; the sequence is PLLILDFGSQ…VVDICKASTD (199 aa). Cys85 acts as the Nucleophile in catalysis. Residues His180 and Glu182 contribute to the active site. Residues 207–400 enclose the GMPS ATP-PPase domain; the sequence is WTPEHIIDEA…LGLPHDMVYR (194 aa). 234–240 is an ATP binding site; sequence SGGVDSS.

In terms of assembly, homodimer.

It carries out the reaction XMP + L-glutamine + ATP + H2O = GMP + L-glutamate + AMP + diphosphate + 2 H(+). It functions in the pathway purine metabolism; GMP biosynthesis; GMP from XMP (L-Gln route): step 1/1. Catalyzes the synthesis of GMP from XMP. The chain is GMP synthase [glutamine-hydrolyzing] from Legionella pneumophila subsp. pneumophila (strain Philadelphia 1 / ATCC 33152 / DSM 7513).